Here is a 791-residue protein sequence, read N- to C-terminus: Lon protease (791 aa).

The 207-residue stretch at 3–209 (KPILISRAIV…TILHLLFDQL (207 aa)) folds into the Lon N-terminal domain. 365 to 372 (GPPGVGKT) contacts ATP. Positions 605–790 (TTIPGIVNGM…DEVYNIVFGE (186 aa)) constitute a Lon proteolytic domain. Active-site residues include S696 and K739.

This sequence belongs to the peptidase S16 family. In terms of assembly, homohexamer. Organized in a ring with a central cavity.

It localises to the cytoplasm. It carries out the reaction Hydrolysis of proteins in presence of ATP.. Functionally, ATP-dependent serine protease that mediates the selective degradation of mutant and abnormal proteins as well as certain short-lived regulatory proteins. Required for cellular homeostasis and for survival from DNA damage and developmental changes induced by stress. Degrades polypeptides processively to yield small peptide fragments that are 5 to 10 amino acids long. Binds to DNA in a double-stranded, site-specific manner. The sequence is that of Lon protease from Ureaplasma parvum serovar 3 (strain ATCC 27815 / 27 / NCTC 11736).